A 306-amino-acid chain; its full sequence is Aspartate carbamoyltransferase catalytic subunit (306 aa).

Positions 49 and 50 each coordinate carbamoyl phosphate. Lys77 is a binding site for L-aspartate. Carbamoyl phosphate contacts are provided by Arg99, His127, and Gln130. Arg160 and Arg211 together coordinate L-aspartate. Carbamoyl phosphate is bound by residues Ala250 and Pro251.

The protein belongs to the aspartate/ornithine carbamoyltransferase superfamily. ATCase family. In terms of assembly, heterododecamer (2C3:3R2) of six catalytic PyrB chains organized as two trimers (C3), and six regulatory PyrI chains organized as three dimers (R2).

The enzyme catalyses carbamoyl phosphate + L-aspartate = N-carbamoyl-L-aspartate + phosphate + H(+). It participates in pyrimidine metabolism; UMP biosynthesis via de novo pathway; (S)-dihydroorotate from bicarbonate: step 2/3. Functionally, catalyzes the condensation of carbamoyl phosphate and aspartate to form carbamoyl aspartate and inorganic phosphate, the committed step in the de novo pyrimidine nucleotide biosynthesis pathway. This Bacillus licheniformis (strain ATCC 14580 / DSM 13 / JCM 2505 / CCUG 7422 / NBRC 12200 / NCIMB 9375 / NCTC 10341 / NRRL NRS-1264 / Gibson 46) protein is Aspartate carbamoyltransferase catalytic subunit.